A 568-amino-acid polypeptide reads, in one-letter code: Archaeosine synthase subunit alpha (568 aa).

A PUA domain is found at 496 to 565; it reads YDALKSYWVK…AKKGVAVKVR (70 aa).

This sequence belongs to the archaeosine synthase type 1 family. As to quaternary structure, forms a robust complex with the archaeosine synthase beta subunit RaSEA, likely an alpha(2)beta(2) heterotetrameric structure. Formation of this complex highly increases lysine transfer activity.

The enzyme catalyses 7-cyano-7-carbaguanosine(15) in tRNA + L-lysine = 7-N-[(5S)-5-amino-5-carboxypentyl]formamidino-7-deazaguanosine(15) in tRNA. It functions in the pathway tRNA modification; archaeosine-tRNA biosynthesis. Functionally, functions in the biosynthesis of archaeosine, a modified nucleoside present in the dihydrouridine loop (D-loop) of archaeal tRNAs. Catalyzes the addition of L-lysine to the cyano group of 7-cyano-7-deazaguanine (preQ0)-modified tRNAs at position 15, to generate q0kN15-tRNA, a q0N lysine adduct identified as 7-N-[(5S)-5-amino-5-carboxypentyl]formamidino-7-deazaguanosine. The chain is Archaeosine synthase subunit alpha from Thermococcus kodakarensis (strain ATCC BAA-918 / JCM 12380 / KOD1) (Pyrococcus kodakaraensis (strain KOD1)).